Here is a 240-residue protein sequence, read N- to C-terminus: 2,3-bisphosphoglycerate-dependent phosphoglycerate mutase 2 (240 aa).

Substrate-binding positions include 8–15, 21–22, Arg-60, 87–90, Lys-98, 114–115, and 183–184; these read RHGQSEWN, TG, ERHY, RR, and GN. His-9 functions as the Tele-phosphohistidine intermediate in the catalytic mechanism. The active-site Proton donor/acceptor is the Glu-87.

Belongs to the phosphoglycerate mutase family. BPG-dependent PGAM subfamily.

It catalyses the reaction (2R)-2-phosphoglycerate = (2R)-3-phosphoglycerate. It functions in the pathway carbohydrate degradation; glycolysis; pyruvate from D-glyceraldehyde 3-phosphate: step 3/5. Functionally, catalyzes the interconversion of 2-phosphoglycerate and 3-phosphoglycerate. In Bacillus cereus (strain ATCC 10987 / NRS 248), this protein is 2,3-bisphosphoglycerate-dependent phosphoglycerate mutase 2.